The sequence spans 451 residues: uncharacterized protein (451 aa).

One can recognise a TRAM domain in the interval 2 to 60; the sequence is VVKVKQKIPLKIKRMGINGEGIGFYQKTLVFVPGALKGENIFCQITAVKRNFAEAKLLT. [4Fe-4S] cluster-binding residues include Cys73, Cys79, Cys82, and Cys162. S-adenosyl-L-methionine contacts are provided by Gln283, Tyr312, Asp333, and Asp381. The Nucleophile role is filled by Cys408.

The protein belongs to the class I-like SAM-binding methyltransferase superfamily. RNA M5U methyltransferase family.

This is an uncharacterized protein from Streptococcus pyogenes serotype M3 (strain ATCC BAA-595 / MGAS315).